Reading from the N-terminus, the 390-residue chain is Na(+)/H(+) antiporter NhaA (390 aa).

11 consecutive transmembrane segments (helical) span residues 13–33 (FQLE…ALVI), 61–81 (LSVH…FVTL), 99–119 (LLPI…YVFI), 129–149 (GWAI…SLLG), 158–178 (VFLT…IAFF), 181–201 (GDLS…LLTL), 209–229 (FIPY…SGIH), 259–279 (AISP…NAGV), 297–317 (ILLG…FIAV), 330–350 (WLSL…SLFV), and 367–387 (IGVL…LLYA).

Belongs to the NhaA Na(+)/H(+) (TC 2.A.33) antiporter family.

The protein resides in the cell inner membrane. The catalysed reaction is Na(+)(in) + 2 H(+)(out) = Na(+)(out) + 2 H(+)(in). In terms of biological role, na(+)/H(+) antiporter that extrudes sodium in exchange for external protons. This is Na(+)/H(+) antiporter NhaA from Pelagibacter ubique (strain HTCC1062).